The sequence spans 343 residues: Methionine import ATP-binding protein MetN 1 (343 aa).

In terms of domain architecture, ABC transporter spans 2 to 241; it reads IKLSNITKVF…PKTPLAQKFI (240 aa). 38-45 lines the ATP pocket; the sequence is GASGAGKS.

Belongs to the ABC transporter superfamily. Methionine importer (TC 3.A.1.24) family. The complex is composed of two ATP-binding proteins (MetN), two transmembrane proteins (MetI) and a solute-binding protein (MetQ).

It localises to the cell inner membrane. The enzyme catalyses L-methionine(out) + ATP + H2O = L-methionine(in) + ADP + phosphate + H(+). The catalysed reaction is D-methionine(out) + ATP + H2O = D-methionine(in) + ADP + phosphate + H(+). Functionally, part of the ABC transporter complex MetNIQ involved in methionine import. Responsible for energy coupling to the transport system. This chain is Methionine import ATP-binding protein MetN 1, found in Salmonella typhimurium (strain LT2 / SGSC1412 / ATCC 700720).